Consider the following 160-residue polypeptide: Protein max (160 aa).

The span at 1–13 shows a compositional bias: acidic residues; sequence MSDNDDIEVESDE. The interval 1-40 is disordered; that stretch reads MSDNDDIEVESDEEQPRFQSAADKRAHHNALERKRRDHIK. N-acetylserine is present on Ser-2. Phosphoserine is present on residues Ser-2 and Ser-11. The bHLH domain maps to 23 to 74; it reads DKRAHHNALERKRRDHIKDSFHSLRDSVPSLQGEKASRAQILDKATEYIQYM. Residues 29–40 are compositionally biased toward basic and acidic residues; it reads NALERKRRDHIK. Lys-66 carries the post-translational modification N6-acetyllysine. The tract at residues 81-102 is leucine-zipper; the sequence is HQQDIDDLKRQNALLEQQVRAL. The segment at 104-160 is disordered; the sequence is KARSSAQLQTNYPSSDNSLYTNAKGGTISAFDGGSDSSSESEPEEPQSRKKLRMEAS. Position 107 is a phosphoserine (Ser-107). The segment covering 107–124 has biased composition (polar residues); sequence SSAQLQTNYPSSDNSLYT. Residues Lys-153 and Lys-154 each carry the N6-acetyllysine modification.

It belongs to the MAX family. In terms of assembly, efficient DNA binding requires dimerization with another bHLH protein. Binds DNA as a heterodimer with MYC or MAD. Part of the E2F6.com-1 complex in G0 phase composed of E2F6, MGA, MAX, TFDP1, CBX3, BAT8, EUHMTASE1, RING1, RNF2, MBLR, L3MBTL2 and YAF2. Component of some MLL1/MLL complex, at least composed of the core components KMT2A/MLL1, ASH2L, HCFC1/HCF1, WDR5 and RBBP5, as well as the facultative components BACC1, CHD8, E2F6, HSP70, INO80C, KANSL1, LAS1L, MAX, MCRS1, MGA, MYST1/MOF, PELP1, PHF20, PRP31, RING2, RUVB1/TIP49A, RUVB2/TIP49B, SENP3, TAF1, TAF4, TAF6, TAF7, TAF9 and TEX10. Interacts with SPAG9. The heterodimer MYC:MAX interacts with ABI1; the interaction may enhance MYC:MAX transcriptional activity. Post-translationally, phosphorylated.

The protein resides in the nucleus. It is found in the cell projection. The protein localises to the dendrite. Functionally, transcription regulator. Forms a sequence-specific DNA-binding protein complex with MYC or MAD which recognizes the core sequence 5'-CAC[GA]TG-3'. The MYC:MAX complex is a transcriptional activator, whereas the MAD:MAX complex is a repressor. CpG methylation of the recognition site greatly inhibits DNA binding, suggesting that DNA methylation may regulate the MYC:MAX complex in vivo. May repress transcription via the recruitment of a chromatin remodeling complex containing H3 'Lys-9' histone methyltransferase activity. Represses MYC transcriptional activity from E-box elements. The sequence is that of Protein max from Mus musculus (Mouse).